Reading from the N-terminus, the 1915-residue chain is Ankyrin repeat domain-containing protein 36A (1915 aa).

ANK repeat units lie at residues 31–60 (YHLK…DANK), 64–93 (KERT…ELNL), 97–126 (EDRT…NPNI), 130–159 (FGRT…NIEE), 163–192 (CEYQ…NVNA), and 196–225 (LGRS…DVLS). 5 disordered regions span residues 261–331 (PINS…DEQK), 470–619 (ATGQ…QKQS), 639–663 (MGGG…DKTD), 676–1203 (LQCG…KATS), and 1285–1304 (KDVQ…SEGE). Polar residues-rich tracts occupy residues 262 to 272 (INSNPVSSQKQ) and 297 to 306 (KSGTVSSQKQ). Residues 505–521 (SLTSSEESSERPPLSTL) are compositionally biased toward low complexity. 2 stretches are compositionally biased toward basic and acidic residues: residues 551–562 (PAEKATSDDKDS) and 585–596 (PAEKATSDEKDS). Polar residues-rich tracts occupy residues 597-619 (VSNI…QKQS) and 645-657 (GTVS…ASKA). Composition is skewed to basic and acidic residues over residues 806–815 (RENKDGEKSR), 874–883 (RENKDGEKSR), 931–951 (SDEK…EISR), 976–985 (RENKDGEKSR), 1044–1053 (RENKDGEKSR), 1100–1121 (TSDE…EKSR), and 1134–1152 (ICDK…KDEQ). Positions 1175–1196 (VSNIPTEIKDGQQSGTVSSQKQ) are enriched in polar residues. 4 coiled-coil regions span residues 1383 to 1466 (IKLK…TEEQ), 1504 to 1531 (KEDL…IKNQ), 1573 to 1614 (LAAL…ARCD), and 1727 to 1814 (NMLL…KRDD). A disordered region spans residues 1489 to 1508 (KTGGNNSNQVSETDEKEDLL).

It belongs to the ANKRD36 family.

The chain is Ankyrin repeat domain-containing protein 36A (ANKRD36) from Homo sapiens (Human).